The following is a 665-amino-acid chain: Protein Fe65 homolog (665 aa).

The segment covering methionine 1–valine 12 has biased composition (basic and acidic residues). Disordered regions lie at residues methionine 1–threonine 43 and serine 90–asparagine 111. The segment covering lysine 14–serine 24 has biased composition (polar residues). 2 stretches are compositionally biased toward basic and acidic residues: residues glutamate 27–aspartate 40 and glycine 102–asparagine 111. The WW domain occupies lysine 233–proline 266. PID domains follow at residues valine 330–cysteine 456 and phenylalanine 499–alanine 615.

As to quaternary structure, interacts (via PID 2 domain) with apl-1 (via cytoplasmic domain). In terms of processing, phosphorylated. Expressed in the pharynx (including pharyngeal muscle and nerve cells), ventral nerve cord and tail neurons.

Its subcellular location is the cytoplasm. It localises to the cytoskeleton. Its function is as follows. Modulates pharyngeal pumping activity, at least in part by regulating expression of the acetylcholinesterase genes ace-1 and ace-2. The protein is Protein Fe65 homolog of Caenorhabditis elegans.